The following is a 270-amino-acid chain: Putative ABC transporter ATP-binding protein MG304 homolog (270 aa).

The ABC transporter domain maps to 2 to 232; the sequence is LNVTNLSFTY…LHLFHQHHFT (231 aa). 36–43 is a binding site for ATP; sequence GHNGSGKS.

Belongs to the ABC transporter superfamily.

This Mycoplasma pneumoniae (strain ATCC 29342 / M129 / Subtype 1) (Mycoplasmoides pneumoniae) protein is Putative ABC transporter ATP-binding protein MG304 homolog.